We begin with the raw amino-acid sequence, 611 residues long: Protein spaetzle 3 (611 aa).

Positions 1–14 (MALTNFSLPFGALG) are cleaved as a signal peptide. N5 carries an N-linked (GlcNAc...) asparagine glycan. The interval 57–322 (EYFKNNPYAP…NDKSNNNQMP (266 aa)) is disordered. 3 stretches are compositionally biased toward low complexity: residues 104–120 (QQVQ…QHQQ), 127–153 (SVSF…LTQT), and 169–185 (PGQQ…QQKQ). Residues 191–210 (GSASATFTKNSGSFSITSFG) are compositionally biased toward polar residues. The span at 218–239 (PPQPQQPPPSQQQQPPPAPPPQ) shows a compositional bias: pro residues. Residues 288–306 (YDVEEGEEDEEEDGEEEGQ) show a composition bias toward acidic residues. N335 and N351 each carry an N-linked (GlcNAc...) asparagine glycan. The interval 477 to 518 (KKRQAAAGGSRNRGGSAGGSGNGNTNANRQPGNKNGSSGTGR) is disordered. A compositionally biased stretch (gly residues) spans 487–498 (RNRGGSAGGSGN). The N-linked (GlcNAc...) asparagine glycan is linked to N511. One can recognise a Spaetzle domain in the interval 521-609 (ACESKIEIVT…LFPSCCVCRC (89 aa)). Disulfide bonds link C522/C573, C559/C605, and C567/C607.

Homodimer; disulfide-linked.

Neurotrophin which may function as a ligand to the Toll-related receptor Tollo. Involved in a Tollo and JNK signaling pathway that positively regulates neuromuscular junction (NMJ) growth in presynaptic motorneurons. May function by activating Tollo to promote the phosphorylation of JNK. The chain is Protein spaetzle 3 from Drosophila melanogaster (Fruit fly).